The chain runs to 433 residues: Probable M18 family aminopeptidase 2 (433 aa).

Zn(2+) is bound by residues His79, His153, and His404.

It belongs to the peptidase M18 family. Requires Zn(2+) as cofactor.

This is Probable M18 family aminopeptidase 2 (apeB) from Mycobacterium bovis (strain ATCC BAA-935 / AF2122/97).